The sequence spans 232 residues: Octanoyltransferase (232 aa).

One can recognise a BPL/LPL catalytic domain in the interval 44–219 (EYTADEIWVV…QLARQFGLVL (176 aa)). Substrate-binding positions include 83-90 (RGGQVTYH), 150-152 (ALG), and 163-165 (GLS). Catalysis depends on C181, which acts as the Acyl-thioester intermediate.

It belongs to the LipB family.

The protein localises to the cytoplasm. The catalysed reaction is octanoyl-[ACP] + L-lysyl-[protein] = N(6)-octanoyl-L-lysyl-[protein] + holo-[ACP] + H(+). The protein operates within protein modification; protein lipoylation via endogenous pathway; protein N(6)-(lipoyl)lysine from octanoyl-[acyl-carrier-protein]: step 1/2. Its function is as follows. Catalyzes the transfer of endogenously produced octanoic acid from octanoyl-acyl-carrier-protein onto the lipoyl domains of lipoate-dependent enzymes. Lipoyl-ACP can also act as a substrate although octanoyl-ACP is likely to be the physiological substrate. The protein is Octanoyltransferase of Xanthomonas axonopodis pv. citri (strain 306).